A 333-amino-acid polypeptide reads, in one-letter code: Bifunctional phosphoglucose/phosphomannose isomerase (333 aa).

Positions 22-160 constitute an SIS domain; the sequence is LEGALEGVEE…SGALGVDLEA (139 aa). Positions 39, 40, 84, 86, 89, and 136 each coordinate D-fructose 6-phosphate. Glu211 serves as the catalytic Proton acceptor. Residues His227 and Lys322 each contribute to the D-fructose 6-phosphate site. The active-site Proton donor is His227. The Proton acceptor role is filled by Lys322.

It belongs to the PGI/PMI family. In terms of assembly, homodimer.

It carries out the reaction alpha-D-glucose 6-phosphate = beta-D-fructose 6-phosphate. It catalyses the reaction D-mannose 6-phosphate = D-fructose 6-phosphate. With respect to regulation, inhibited by low concentrations of erythrose 4-phosphate and 6-phosphogluconate. Its function is as follows. Dual specificity isomerase that catalyzes the isomerization of both glucose-6-phosphate and mannose-6-phosphate to fructose-6-phosphate with similar catalytic efficiency. This chain is Bifunctional phosphoglucose/phosphomannose isomerase, found in Aeropyrum pernix (strain ATCC 700893 / DSM 11879 / JCM 9820 / NBRC 100138 / K1).